The chain runs to 495 residues: Glutamyl-tRNA(Gln) amidotransferase subunit A (495 aa).

Residues K78 and S158 each act as charge relay system in the active site. The Acyl-ester intermediate role is filled by S182.

Belongs to the amidase family. GatA subfamily. In terms of assembly, heterotrimer of A, B and C subunits.

It catalyses the reaction L-glutamyl-tRNA(Gln) + L-glutamine + ATP + H2O = L-glutaminyl-tRNA(Gln) + L-glutamate + ADP + phosphate + H(+). Allows the formation of correctly charged Gln-tRNA(Gln) through the transamidation of misacylated Glu-tRNA(Gln) in organisms which lack glutaminyl-tRNA synthetase. The reaction takes place in the presence of glutamine and ATP through an activated gamma-phospho-Glu-tRNA(Gln). This Roseobacter denitrificans (strain ATCC 33942 / OCh 114) (Erythrobacter sp. (strain OCh 114)) protein is Glutamyl-tRNA(Gln) amidotransferase subunit A.